The following is a 451-amino-acid chain: UDP-N-acetylmuramoylalanine--D-glutamate ligase (451 aa).

118–124 (GTKGKST) is a binding site for ATP.

The protein belongs to the MurCDEF family.

It is found in the cytoplasm. It carries out the reaction UDP-N-acetyl-alpha-D-muramoyl-L-alanine + D-glutamate + ATP = UDP-N-acetyl-alpha-D-muramoyl-L-alanyl-D-glutamate + ADP + phosphate + H(+). It participates in cell wall biogenesis; peptidoglycan biosynthesis. Functionally, cell wall formation. Catalyzes the addition of glutamate to the nucleotide precursor UDP-N-acetylmuramoyl-L-alanine (UMA). The sequence is that of UDP-N-acetylmuramoylalanine--D-glutamate ligase from Borreliella afzelii (strain PKo) (Borrelia afzelii).